Here is a 292-residue protein sequence, read N- to C-terminus: Hydroxysqualene synthase (292 aa).

It belongs to the phytoene/squalene synthase family. HpnC subfamily.

It carries out the reaction presqualene diphosphate + H2O = hydroxysqualene + diphosphate. Its pathway is secondary metabolite biosynthesis; hopanoid biosynthesis. Its function is as follows. Involved in the biosynthesis of the hopanoid precursor squalene (SQ) from farnesyl diphosphate (FPP). Catalyzes the second step, the conversion of presqualene diphosphate (PSPP) to hydroxysqualene (HSQ). This chain is Hydroxysqualene synthase, found in Sinorhizobium fredii (strain NBRC 101917 / NGR234).